A 153-amino-acid chain; its full sequence is Putative trans-acting regulator pXO2-62/BXB0076/GBAA_pXO2_0076 (153 aa).

This sequence belongs to the AtxA/AcpA family.

This is Putative trans-acting regulator pXO2-62/BXB0076/GBAA_pXO2_0076 from Bacillus anthracis.